The primary structure comprises 319 residues: Cytochrome c biogenesis protein CcsA (319 aa).

A run of 7 helical transmembrane segments spans residues 9–29 (ILTHISFSTISIVITIHLITL), 44–64 (GMIVTFFSITGFLVSRWASSG), 68–88 (LSNLYESLIFLSWALYILHTI), 143–163 (MLLSYATLLCGSLLSAAILII), 223–243 (VISLGFTLLTIGILCGAVWAN), 257–271 (TWAFITWTIFAIYLH), and 286–306 (VASIGFLIIWICYFGINLLGI).

It belongs to the CcmF/CycK/Ccl1/NrfE/CcsA family. As to quaternary structure, may interact with Ccs1.

Its subcellular location is the plastid. It localises to the chloroplast thylakoid membrane. In terms of biological role, required during biogenesis of c-type cytochromes (cytochrome c6 and cytochrome f) at the step of heme attachment. The sequence is that of Cytochrome c biogenesis protein CcsA from Agrostis stolonifera (Creeping bentgrass).